A 76-amino-acid chain; its full sequence is UPF0248 protein MmarC6_0667 (76 aa).

Belongs to the UPF0248 family.

This chain is UPF0248 protein MmarC6_0667, found in Methanococcus maripaludis (strain C6 / ATCC BAA-1332).